The primary structure comprises 213 residues: Leucyl/phenylalanyl-tRNA--protein transferase (213 aa).

It belongs to the L/F-transferase family.

It is found in the cytoplasm. It catalyses the reaction N-terminal L-lysyl-[protein] + L-leucyl-tRNA(Leu) = N-terminal L-leucyl-L-lysyl-[protein] + tRNA(Leu) + H(+). The enzyme catalyses N-terminal L-arginyl-[protein] + L-leucyl-tRNA(Leu) = N-terminal L-leucyl-L-arginyl-[protein] + tRNA(Leu) + H(+). The catalysed reaction is L-phenylalanyl-tRNA(Phe) + an N-terminal L-alpha-aminoacyl-[protein] = an N-terminal L-phenylalanyl-L-alpha-aminoacyl-[protein] + tRNA(Phe). Its function is as follows. Functions in the N-end rule pathway of protein degradation where it conjugates Leu, Phe and, less efficiently, Met from aminoacyl-tRNAs to the N-termini of proteins containing an N-terminal arginine or lysine. This chain is Leucyl/phenylalanyl-tRNA--protein transferase, found in Campylobacter lari (strain RM2100 / D67 / ATCC BAA-1060).